The chain runs to 311 residues: Small ribosomal subunit biogenesis GTPase RsgA (311 aa).

A CP-type G domain is found at 88 to 246 (SKEKEQVIAA…VIDTPGIREF (159 aa)). GTP contacts are provided by residues 137–140 (NKID) and 188–196 (GHSGVGKST). The Zn(2+) site is built by Cys-270, Cys-275, His-277, and Cys-283.

Belongs to the TRAFAC class YlqF/YawG GTPase family. RsgA subfamily. In terms of assembly, monomer. Associates with 30S ribosomal subunit, binds 16S rRNA. The cofactor is Zn(2+).

The protein resides in the cytoplasm. Functionally, one of several proteins that assist in the late maturation steps of the functional core of the 30S ribosomal subunit. Helps release RbfA from mature subunits. May play a role in the assembly of ribosomal proteins into the subunit. Circularly permuted GTPase that catalyzes slow GTP hydrolysis, GTPase activity is stimulated by the 30S ribosomal subunit. The protein is Small ribosomal subunit biogenesis GTPase RsgA of Chlorobaculum parvum (strain DSM 263 / NCIMB 8327) (Chlorobium vibrioforme subsp. thiosulfatophilum).